The chain runs to 119 residues: Large ribosomal subunit protein bL20 (119 aa).

The protein belongs to the bacterial ribosomal protein bL20 family.

Functionally, binds directly to 23S ribosomal RNA and is necessary for the in vitro assembly process of the 50S ribosomal subunit. It is not involved in the protein synthesizing functions of that subunit. This chain is Large ribosomal subunit protein bL20, found in Treponema denticola (strain ATCC 35405 / DSM 14222 / CIP 103919 / JCM 8153 / KCTC 15104).